Consider the following 753-residue polypeptide: MTILNHTLGFPRVGLRRELKKAQESYWAGNSTREELLAVGRELRARHWDQQKQAGIDLLPVGDFAWYDHVLTTSLLLGNVPARHQNKDGSVDIDTLFRIGRGRAPTGEPAAAAEMTKWFNTNYHYMVPEFVKGQQFKLTWTQLLEEVDEALALGHKVKPVLLGPVTYLWLGKVKGEQFDRLSLLNDILPVYQQVLAELAKRGIEWVQIDEPALVLELPQAWLDAYKPAYDALQGQVKLLLTTYFEGVTPNLDTITALPVQGLHVDLVHGKDDVAELHKRLPSDWLLSAGLINGRNVWRADLTEKYAQIKDIVGKRDLWVASSCSLLHSPIDLSVETRLDAEVKSWFAFALQKCHELALLRDVLNSGDTAALAEWSAPIQARRHSTRVHNPAVEKRLAAITAQDSQRTNVYEVRAEAQRARFKLPAWPTTTIGSFPQTTEIRTLRLDFKKGNLDANNYRTGIAEHIKQAIVEQERLGLDVLVHGEAERNDMVEYFGEHLDGFVFTQNGWVQSYGSRCVKPPIVIGDVSRPAPITVEWAKYAQSLTDKPVKGMLTGPVTILCWSFPREDVSRETIAKQIALALRDEVADLEAAGIGIIQIDEPALREGLPLRRSDWDAYLQWGVEAFRINAAVAKDDTQIHTHMCYCEFNDIMDSIAALDADVITIETSRSDMELLESFEEFDYPNEIGPGVYDIHSPNVPSVEWIEALLKKAAKRIPAERLWVNPDCGLKTRGWPETRAALANMVQAAQNLRRG.

Residues 17 to 20 and K117 each bind 5-methyltetrahydropteroyltri-L-glutamate; that span reads RELK. Residues 431 to 433 and E484 contribute to the L-homocysteine site; that span reads IGS. Residues 431–433 and E484 each bind L-methionine; that span reads IGS. 5-methyltetrahydropteroyltri-L-glutamate is bound by residues 515–516 and W561; that span reads RC. L-homocysteine is bound at residue D599. D599 serves as a coordination point for L-methionine. Residue E605 coordinates 5-methyltetrahydropteroyltri-L-glutamate. Residues H641, C643, and E665 each coordinate Zn(2+). H694 (proton donor) is an active-site residue. C726 is a binding site for Zn(2+).

It belongs to the vitamin-B12 independent methionine synthase family. It depends on Zn(2+) as a cofactor.

The enzyme catalyses 5-methyltetrahydropteroyltri-L-glutamate + L-homocysteine = tetrahydropteroyltri-L-glutamate + L-methionine. It functions in the pathway amino-acid biosynthesis; L-methionine biosynthesis via de novo pathway; L-methionine from L-homocysteine (MetE route): step 1/1. In terms of biological role, catalyzes the transfer of a methyl group from 5-methyltetrahydrofolate to homocysteine resulting in methionine formation. The chain is 5-methyltetrahydropteroyltriglutamate--homocysteine methyltransferase from Escherichia coli O6:K15:H31 (strain 536 / UPEC).